The sequence spans 361 residues: Cell cycle control protein 50A (361 aa).

Residues 1 to 28 (MAMNYNAKDEVDGGPPCPPGGTAKTRRP) form a disordered region. The residue at position 2 (A2) is an N-acetylalanine. Positions 2-48 (AMNYNAKDEVDGGPPCPPGGTAKTRRPDNTAFKQQRLPAWQPILTAG) are required for ATPase and aminophospholipid flippase activity. Residues 2–49 (AMNYNAKDEVDGGPPCPPGGTAKTRRPDNTAFKQQRLPAWQPILTAGT) lie on the Cytoplasmic side of the membrane. Residues 49–348 (TVLPTFFIIG…LGVVLLVINH (300 aa)) form an interaction with ATP8A2 region. Residues 50–70 (VLPTFFIIGLIFIPIGIGIFV) form a helical membrane-spanning segment. The Exoplasmic loop portion of the chain corresponds to 71–325 (TSNNIREIEI…SWMGGKNPFL (255 aa)). 3 cysteine pairs are disulfide-bonded: C91/C104, C94/C102, and C157/C171. N-linked (GlcNAc...) asparagine glycosylation is found at N180, N190, and N294. The helical transmembrane segment at 326-346 (GIAYITIGSISFLLGVVLLVI) threads the bilayer. Over 347–361 (NHKYRNSSNTADITI) the chain is Cytoplasmic.

It belongs to the CDC50/LEM3 family. Component of various P4-ATPase flippase complexes which consists of a catalytic alpha subunit and an accessory beta subunit. Interacts with ATP8A1 to form a flippase complex; this complex forms an intermediate phosphoenzyme. Interacts with ATP8A2 to form a flippase complex. ATP8B1:TMEM30A and ATP8B2:TMEM30A flippase complexes have been shown to form intermediate phosphoenzymes in vitro. Interacts with alpha subunits ATP8A1, ATP8B1, ATP8B2, ATP8B4, ATP10A, ATP10B, ATP10D, ATP11A, ATP11B and ATP11C. Post-translationally, N-glycosylated; contributes to ATP8A2:TMEM30A flippase complex assembly but not to functional activity. Expressed in photoreceptor cells; detected in retina outer segment and other retinal layers (at protein level).

The protein resides in the membrane. Its subcellular location is the golgi apparatus. It is found in the cytoplasmic vesicle. The protein localises to the secretory vesicle membrane. It localises to the apical cell membrane. The protein resides in the photoreceptor inner segment. Its subcellular location is the cell projection. It is found in the cilium. The protein localises to the photoreceptor outer segment. Accessory component of a P4-ATPase flippase complex which catalyzes the hydrolysis of ATP coupled to the transport of aminophospholipids from the outer to the inner leaflet of various membranes and ensures the maintenance of asymmetric distribution of phospholipids. Phospholipid translocation also seems to be implicated in vesicle formation and in uptake of lipid signaling molecules. The beta subunit may assist in binding of the phospholipid substrate. Required for the proper folding, assembly and ER to Golgi exit of the ATP8A2:TMEM30A flippase complex. ATP8A2:TMEM30A may be involved in regulation of neurite outgrowth, and, reconstituted to liposomes, predomiminantly transports phosphatidylserine (PS) and to a lesser extent phosphatidylethanolamine (PE). The ATP8A1:TMEM30A flippase complex seems to play a role in regulation of cell migration probably involving flippase-mediated translocation of phosphatidylethanolamine (PE) at the plasma membrane. Required for the formation of the ATP8A2, ATP8B1 and ATP8B2 P-type ATPAse intermediate phosphoenzymes. Involved in uptake of platelet-activating factor (PAF). Can also mediate the export of alpha subunits ATP8A1, ATP8B1, ATP8B2, ATP8B4, ATP10A, ATP10B, ATP10D, ATP11A, ATP11B and ATP11C from the ER to other membrane localizations. This Bos taurus (Bovine) protein is Cell cycle control protein 50A.